Reading from the N-terminus, the 292-residue chain is Protease HtpX homolog (292 aa).

2 consecutive transmembrane segments (helical) span residues 7 to 27 and 29 to 49; these read TFIL…LIGG and GGAV…WWNS. Histidine 131 contributes to the Zn(2+) binding site. Residue glutamate 132 is part of the active site. Zn(2+) is bound at residue histidine 135. Transmembrane regions (helical) follow at residues 148–168 and 178–198; these read ATMA…SMFG and LAAI…QMAI. Glutamate 203 serves as a coordination point for Zn(2+).

This sequence belongs to the peptidase M48B family. The cofactor is Zn(2+).

The protein resides in the cell inner membrane. In Paracoccus denitrificans (strain Pd 1222), this protein is Protease HtpX homolog.